Reading from the N-terminus, the 414-residue chain is Serine-type anaerobic sulfatase-maturating enzyme (414 aa).

The 246-residue stretch at 5–250 (TYAPFAKPLY…LCTIFDEWVK (246 aa)) folds into the Radical SAM core domain. [4Fe-4S] cluster is bound by residues Cys-24 and Cys-28. Tyr-30 serves as a coordination point for S-adenosyl-L-methionine. Position 31 (Cys-31) interacts with [4Fe-4S] cluster. Positions 76, 131, and 143 each coordinate S-adenosyl-L-methionine. Positions 276, 282, and 297 each coordinate [4Fe-4S] cluster. Catalysis depends on Asp-298, which acts as the Proton acceptor. [4Fe-4S] cluster contacts are provided by Cys-339, Cys-342, Cys-348, Cys-352, and Cys-371.

This sequence belongs to the radical SAM superfamily. Anaerobic sulfatase-maturating enzyme family. Requires [4Fe-4S] cluster as cofactor.

The catalysed reaction is L-seryl-[sulfatase] + S-adenosyl-L-methionine = 3-oxo-L-alanyl-[sulfatase] + 5'-deoxyadenosine + L-methionine + H(+). It participates in protein modification; sulfatase oxidation. Involved in 'Ser-type' sulfatase maturation under anaerobic conditions. Links the heparin and the chondroitin sulfate utilization pathways which contribute to the colonization of the intestinal tract. May catalyze the activation of chondro-6-sulfatase, i.e. the post-translational modification of a specific serine residue into 3-oxoalanine (also known as C(alpha)-formylglycine (FGly)), by a free radical chemical mechanism initiated via the reductive cleavage of S-adenosyl-L-methionine (SAM). Is also able to oxidize a cysteine residue in a synthetic substrate to FGly in vitro, but not in a recombinant Cys-type sulfatase in vivo. But since B.thetaiotaomicron possesses only Ser-type sulfatases, the oxidation of serine residues to FGly is the sole physiological activity. In Bacteroides thetaiotaomicron (strain ATCC 29148 / DSM 2079 / JCM 5827 / CCUG 10774 / NCTC 10582 / VPI-5482 / E50), this protein is Serine-type anaerobic sulfatase-maturating enzyme (chuR).